The primary structure comprises 301 residues: Zinc finger protein LEE1 (301 aa).

Positions 1–25 (MDAFENMSVSNHPGGNARRNSQSAN) are disordered. The span at 7 to 25 (MSVSNHPGGNARRNSQSAN) shows a compositional bias: polar residues. 2 positions are modified to phosphoserine: S21 and S30. 2 C3H1-type zinc fingers span residues 87–114 (DYSHVPCKFFKMGNCQAGSSCPFSHSPD) and 123–145 (PCKYFAKGNCKFGNKCVNAHVLP). S282 is subject to Phosphoserine.

This is Zinc finger protein LEE1 (LEE1) from Saccharomyces cerevisiae (strain ATCC 204508 / S288c) (Baker's yeast).